Consider the following 236-residue polypeptide: Uridylate kinase (236 aa).

An ATP-binding site is contributed by 9–12; that stretch reads KFSG. The involved in allosteric activation by GTP stretch occupies residues 17 to 22; it reads GNSGFG. Residue G51 participates in UMP binding. ATP-binding residues include G52 and R56. UMP-binding positions include D72 and 133 to 140; that span reads TGNPFFTT. The ATP site is built by T160, Y166, and D169.

The protein belongs to the UMP kinase family. Homohexamer.

Its subcellular location is the cytoplasm. The enzyme catalyses UMP + ATP = UDP + ADP. The protein operates within pyrimidine metabolism; CTP biosynthesis via de novo pathway; UDP from UMP (UMPK route): step 1/1. Its activity is regulated as follows. Allosterically activated by GTP. Inhibited by UTP. Its function is as follows. Catalyzes the reversible phosphorylation of UMP to UDP. This is Uridylate kinase from Helicobacter hepaticus (strain ATCC 51449 / 3B1).